We begin with the raw amino-acid sequence, 1049 residues long: Desmoglein-1 (1049 aa).

The N-terminal stretch at 1-23 is a signal peptide; sequence MDWSFFRVVAMLFIFLVVVEVNS. The propeptide occupies 24–49; sequence EFRIQVRDYNTKNGTIKWHSIRRQKR. Residues Asn36, Asn110, and Asn180 are each glycosylated (N-linked (GlcNAc...) asparagine). Cadherin domains lie at 50 to 158, 159 to 270, 271 to 385, and 386 to 497; these read EWIK…PVFS, MATF…PYME, QSSY…GPVF, and RPGS…TEPN. At 50–548 the chain is on the extracellular side; it reads EWIKFAAACR…LLSDNVHFGP (499 aa). The disordered stretch occupies residues 485-534; that stretch reads SFGNDDRTNTEPNTKITTNTGRQESTSSTNYDTSTTSTDSSQVYSSEPGN. Over residues 494 to 508 the composition is skewed to polar residues; the sequence is TEPNTKITTNTGRQE. The segment covering 509 to 530 has biased composition (low complexity); that stretch reads STSSTNYDTSTTSTDSSQVYSS. Residues 549 to 569 form a helical membrane-spanning segment; sequence AGIGLLIMGFLVLGLVPFLMI. Over 570 to 1049 the chain is Cytoplasmic; the sequence is CCDCGGAPRS…TKYSTVQYSK (480 aa). Ser579 carries the phosphoserine modification. Desmoglein repeat repeat units lie at residues 813-839, 840-869, 870-899, 900-927, and 928-956; these read TYPS…TVTE, SYTT…ERVV, GPIS…ERVI, APSS…ERVI, and QPTS…ERVV. Positions 1014-1035 are disordered; that stretch reads HMRSSSDHHFNQTIGSASPSTA. Over residues 1024 to 1035 the composition is skewed to polar residues; it reads NQTIGSASPSTA.

Binds to JUP/plakoglobin. Interacts with PKP2. Interacts with DSC3; there is evidence to suggest that the interaction promotes cell-cell adhesion of keratinocytes. As to quaternary structure, (Microbial infection) Interacts with Staphylococcus aureus protein SdrD; this interaction increases S.aureus adherence to keratinocytes. Expressed in all suprabasal layers of the epidermis, with the highest expression seen in the granular layer (at protein level).

It localises to the cell membrane. It is found in the cell junction. The protein resides in the desmosome. The protein localises to the cytoplasm. Its subcellular location is the nucleus. Functionally, component of intercellular desmosome junctions. Involved in the interaction of plaque proteins and intermediate filaments mediating cell-cell adhesion. In Homo sapiens (Human), this protein is Desmoglein-1 (DSG1).